A 1813-amino-acid polypeptide reads, in one-letter code: Nonribosomal peptide synthetase 1 (1813 aa).

The tract at residues 89 to 494 (EKARRDPSRQ…GRGDQQVKLR (406 aa)) is adenylation. In terms of domain architecture, Carrier 1 spans 624-699 (EPQSERERQL…ELAITLKHSD (76 aa)). An O-(pantetheine 4'-phosphoryl)serine modification is found at Ser-660. Positions 738–1159 (DVYPCTTLQE…LPMTDDELAE (422 aa)) are condensation 1. The Carrier 2 domain maps to 1282-1358 (QVTTPKQQKL…DMADIAKESL (77 aa)). At Ser-1319 the chain carries O-(pantetheine 4'-phosphoryl)serine. The tract at residues 1427–1806 (FYLDAAVDQS…STLFQTDVME (380 aa)) is condensation 2.

This sequence belongs to the NRP synthetase family.

It functions in the pathway siderophore biosynthesis. In terms of biological role, nonribosomal peptide synthetase; part of the gene cluster that mediates the biosynthesis of hydroxamate-containing siderophores that play a critical role in virulence via intracellular iron acquisition during macrophage infection. The chain is Nonribosomal peptide synthetase 1 from Ajellomyces capsulatus (Darling's disease fungus).